The primary structure comprises 670 residues: Methionine--tRNA ligase (670 aa).

Positions 14-24 (PYANGHLHLGH) match the 'HIGH' region motif. Zn(2+) is bound by residues Cys-145, Cys-148, Cys-158, and Cys-161. The 'KMSKS' region motif lies at 330 to 334 (KMSKS). ATP is bound at residue Lys-333. One can recognise a tRNA-binding domain in the interval 570-670 (DFAKVDLRIA…AGALPGMKVK (101 aa)).

This sequence belongs to the class-I aminoacyl-tRNA synthetase family. MetG type 1 subfamily. In terms of assembly, homodimer. It depends on Zn(2+) as a cofactor.

It localises to the cytoplasm. It catalyses the reaction tRNA(Met) + L-methionine + ATP = L-methionyl-tRNA(Met) + AMP + diphosphate. Its function is as follows. Is required not only for elongation of protein synthesis but also for the initiation of all mRNA translation through initiator tRNA(fMet) aminoacylation. This is Methionine--tRNA ligase from Legionella pneumophila subsp. pneumophila (strain Philadelphia 1 / ATCC 33152 / DSM 7513).